An 87-amino-acid polypeptide reads, in one-letter code: MANTASAKKMVRKIKRRTLVNKMRMSRIRTFVRKVRKAIAVGPKSAAAEALRVAQPEIHRGVTKGVLHKNRAARIVSRLSGHIKKMA.

It belongs to the bacterial ribosomal protein bS20 family.

Its function is as follows. Binds directly to 16S ribosomal RNA. This chain is Small ribosomal subunit protein bS20, found in Neorickettsia sennetsu (strain ATCC VR-367 / Miyayama) (Ehrlichia sennetsu).